Consider the following 93-residue polypeptide: Large ribosomal subunit protein uL23cz/uL23cy (93 aa).

It belongs to the universal ribosomal protein uL23 family. In terms of assembly, part of the 50S ribosomal subunit.

It localises to the plastid. It is found in the chloroplast. Its function is as follows. Binds to 23S rRNA. In Atropa belladonna (Belladonna), this protein is Large ribosomal subunit protein uL23cz/uL23cy (rpl23-A).